The following is a 980-amino-acid chain: Putative formate dehydrogenase YrhE (980 aa).

The 2Fe-2S ferredoxin-type domain maps to 5–81; the sequence is KSISVRVDGT…GMSIDLSGNR (77 aa). 4 residues coordinate [2Fe-2S] cluster: Cys39, Cys50, Cys53, and Cys65. Positions 81 to 121 constitute a 4Fe-4S His(Cys)3-ligated-type domain; the sequence is RVKEAQTEAMDRLLENHLLYCTVCDNNNGNCTLHNTAEMMG. [4Fe-4S] cluster is bound by residues His97, Cys101, Cys104, Cys111, Cys153, Cys156, Cys159, Cys163, Cys196, Cys199, Cys202, Cys206, Cys270, Cys273, Cys277, and Cys305. 4Fe-4S ferredoxin-type domains lie at 144 to 171 and 187 to 216; these read PFYRYDPNQCIACGQCVEVCQNLQVNET and EGVPINESSCVSCGQCVTVCPCNALMEKSM. Residues 258 to 980 are formate dehydrogenase; the sequence is MRETRTKKTK…NRPGYVHLTD (723 aa). Residues 263–319 enclose the 4Fe-4S Mo/W bis-MGD-type domain; sequence TKKTKTVCTFCGVGCSFEVWTKGRDILKIQPVSDAPVNAISTCVKGKFGWDFVNSKE. The tract at residues 944–980 is disordered; the sequence is ETAPLPKTNPRNKKRHPQNGVEAERKWNRPGYVHLTD.

This sequence in the C-terminal section; belongs to the prokaryotic molybdopterin-containing oxidoreductase family. [2Fe-2S] cluster is required as a cofactor. [4Fe-4S] cluster serves as cofactor. It depends on Mo-bis(molybdopterin guanine dinucleotide) as a cofactor.

It catalyses the reaction formate + NAD(+) = CO2 + NADH. This chain is Putative formate dehydrogenase YrhE (yrhE), found in Bacillus subtilis (strain 168).